Reading from the N-terminus, the 420-residue chain is MDGTDVTMLMREIGVRARAAAAELAFAEPSRKEEALNAAAEAMLARSDEILEANGRDLAFGAEKGLTPAMMDRLKLDAARIDGIVEGLRAVAGQPDPVGQVIAEWDRPSGLHIRRVRTPLGVVGVIYESRPNVTADAGALCLKSGNAVILRGGSESFHSSGAIHAALQDGLRQAGLPVDAIQRVPTRDRAAVAEMLRMVEHIDVIVPRGGKGLVGLVQAEARVPVFAHLEGICHVYADGDADLEKARRVVLNAKTRRTGICGSAECLLIDRAFLAKHGPVLIEDLLKAGVEVRAEGELAQVPGTVPAQPEDFGREFLDMIIAAKVVDGVDEAIAHIRRYGSSHTESILTENDATAERFFRRLDSAILMRNASTQFADGGEFGMGAEIGIATGKMHARGPVGAEQLTSFKYLVTGDGTIRA.

It belongs to the gamma-glutamyl phosphate reductase family.

It localises to the cytoplasm. It catalyses the reaction L-glutamate 5-semialdehyde + phosphate + NADP(+) = L-glutamyl 5-phosphate + NADPH + H(+). It functions in the pathway amino-acid biosynthesis; L-proline biosynthesis; L-glutamate 5-semialdehyde from L-glutamate: step 2/2. In terms of biological role, catalyzes the NADPH-dependent reduction of L-glutamate 5-phosphate into L-glutamate 5-semialdehyde and phosphate. The product spontaneously undergoes cyclization to form 1-pyrroline-5-carboxylate. This chain is Gamma-glutamyl phosphate reductase, found in Cereibacter sphaeroides (strain ATCC 17029 / ATH 2.4.9) (Rhodobacter sphaeroides).